Consider the following 138-residue polypeptide: Class I hydrophobin 1 (138 aa).

The signal sequence occupies residues 1-19; the sequence is MRFSAATVSALAMALTVAA. Disulfide bonds link Cys45–Cys113, Cys53–Cys107, Cys54–Cys91, and Cys114–Cys131.

It belongs to the fungal hydrophobin family. In terms of assembly, interacts with the lipid droplet coating protein Cap20.

It is found in the secreted. Its subcellular location is the lipid droplet. Functionally, aerial growth, conidiation, and dispersal of filamentous fungi in the environment rely upon a capability of their secreting small amphipathic proteins called hydrophobins (HPBs) with low sequence identity. Class I can self-assemble into an outermost layer of rodlet bundles on aerial cell surfaces, conferring cellular hydrophobicity that supports fungal growth, development and dispersal; whereas Class II form highly ordered films at water-air interfaces through intermolecular interactions but contribute nothing to the rodlet structure. Hydr1 is a class I hydrophobin involved in spore germination, appressorium formation, but not in the formation of the rodlet layer of conidia. Responsible for the full virulence on rubber tree leaves. The chain is Class I hydrophobin 1 from Colletotrichum siamense (Anthracnose fungus).